A 232-amino-acid chain; its full sequence is Lipoprotein-releasing system ATP-binding protein LolD 1 (232 aa).

Residues 11–231 (VYLHDVKRQY…SIQDGLVVEL (221 aa)) form the ABC transporter domain. 47–54 (APSGAGKS) is an ATP binding site.

The protein belongs to the ABC transporter superfamily. Lipoprotein translocase (TC 3.A.1.125) family. The complex is composed of two ATP-binding proteins (LolD) and two transmembrane proteins (LolC and LolE).

The protein resides in the cell inner membrane. Part of the ABC transporter complex LolCDE involved in the translocation of mature outer membrane-directed lipoproteins, from the inner membrane to the periplasmic chaperone, LolA. Responsible for the formation of the LolA-lipoprotein complex in an ATP-dependent manner. This is Lipoprotein-releasing system ATP-binding protein LolD 1 from Rhodopseudomonas palustris (strain BisB18).